The primary structure comprises 314 residues: uncharacterized protein (314 aa).

A signal peptide spans 1–18 (MKVSLLIFLIILVGVIKS). 6 N-linked (GlcNAc...) asparagine glycosylation sites follow: asparagine 43, asparagine 96, asparagine 109, asparagine 116, asparagine 117, and asparagine 161. Positions 252-314 (SMRITKNNPH…PKSIDFHHLF (63 aa)) are disordered. Low complexity-rich tracts occupy residues 257–268 (KNNPHLNNNNNN) and 285–296 (KTTTKTSTKTTS).

It is found in the secreted. This is an uncharacterized protein from Dictyostelium discoideum (Social amoeba).